Here is a 475-residue protein sequence, read N- to C-terminus: Probable L-cysteine desulfhydrase, chloroplastic (475 aa).

The N-terminal 24 residues, 1 to 24 (MASSLSPPEEASYHHRHTKRYTSS), are a transit peptide targeting the chloroplast. Residues 1-40 (MASSLSPPEEASYHHRHTKRYTSSASSASSTTNGTVESSV) form a disordered region. A compositionally biased stretch (low complexity) spans 22–32 (TSSASSASSTT). Position 284 is an N6-(pyridoxal phosphate)lysine (lysine 284).

Belongs to the class-V pyridoxal-phosphate-dependent aminotransferase family. In terms of assembly, interacts in vitro with QS.

The protein localises to the plastid. It localises to the chloroplast. Its function is as follows. May catalyze the production of hydrogen sulfide (H2S) from cysteine. The polypeptide is Probable L-cysteine desulfhydrase, chloroplastic (Arabidopsis thaliana (Mouse-ear cress)).